Consider the following 32-residue polypeptide: Calcitonin (32 aa).

C1 and C7 are oxidised to a cystine. The residue at position 32 (P32) is a Proline amide.

This sequence belongs to the calcitonin family.

The protein resides in the secreted. Its function is as follows. Calcitonin is a peptide hormone that causes a rapid but short-lived drop in the level of calcium and phosphate in blood by promoting the incorporation of those ions in the bones. Calcitonin function is mediated by the calcitonin receptor/CALCR and the CALCR-RAMP2 (AMYR2) receptor complex. In Sus scrofa (Pig), this protein is Calcitonin (CALCA).